A 121-amino-acid chain; its full sequence is Apoptin (121 aa).

Disordered stretches follow at residues 1 to 28 and 57 to 121; these read MNAL…LETP and LRSA…CIRL. A compositionally biased stretch (polar residues) spans 58–70; the sequence is RSATADNSESTGF. The span at 88-102 shows a compositional bias: basic and acidic residues; that stretch reads RSCDPSEYRVSELKE.

The protein belongs to the gyrovirus apoptin family.

The protein resides in the host nucleus. In terms of biological role, may act as transcriptional regulator. Induces apoptosis in infected cells. Element of infectious replication cycle. This chain is Apoptin (VP3), found in Gallus gallus (Chicken).